The following is a 426-amino-acid chain: Serine--tRNA ligase (426 aa).

Residue threonine 233–glutamate 235 coordinates L-serine. Arginine 264–glutamate 266 contacts ATP. Glutamate 287 lines the L-serine pocket. Glutamate 351–serine 354 is a binding site for ATP. Position 386 (serine 386) interacts with L-serine.

Belongs to the class-II aminoacyl-tRNA synthetase family. Type-1 seryl-tRNA synthetase subfamily. Homodimer. The tRNA molecule binds across the dimer.

It localises to the cytoplasm. It carries out the reaction tRNA(Ser) + L-serine + ATP = L-seryl-tRNA(Ser) + AMP + diphosphate + H(+). It catalyses the reaction tRNA(Sec) + L-serine + ATP = L-seryl-tRNA(Sec) + AMP + diphosphate + H(+). It functions in the pathway aminoacyl-tRNA biosynthesis; selenocysteinyl-tRNA(Sec) biosynthesis; L-seryl-tRNA(Sec) from L-serine and tRNA(Sec): step 1/1. Functionally, catalyzes the attachment of serine to tRNA(Ser). Is also able to aminoacylate tRNA(Sec) with serine, to form the misacylated tRNA L-seryl-tRNA(Sec), which will be further converted into selenocysteinyl-tRNA(Sec). The polypeptide is Serine--tRNA ligase (Prochlorococcus marinus (strain NATL2A)).